Here is a 262-residue protein sequence, read N- to C-terminus: Type III pantothenate kinase (262 aa).

12 to 19 provides a ligand contact to ATP; it reads DIGNTSIA. Residues Y94 and 109-112 contribute to the substrate site; that span reads GSDV. The Proton acceptor role is filled by D111. K(+) is bound at residue D132. Residue T135 coordinates ATP. A substrate-binding site is contributed by T187.

It belongs to the type III pantothenate kinase family. In terms of assembly, homodimer. Requires NH4(+) as cofactor. K(+) is required as a cofactor.

It localises to the cytoplasm. The enzyme catalyses (R)-pantothenate + ATP = (R)-4'-phosphopantothenate + ADP + H(+). The protein operates within cofactor biosynthesis; coenzyme A biosynthesis; CoA from (R)-pantothenate: step 1/5. Its function is as follows. Catalyzes the phosphorylation of pantothenate (Pan), the first step in CoA biosynthesis. In Borreliella burgdorferi (strain ATCC 35210 / DSM 4680 / CIP 102532 / B31) (Borrelia burgdorferi), this protein is Type III pantothenate kinase.